Consider the following 602-residue polypeptide: Adenylosuccinate synthetase (602 aa).

GTP is bound by residues G74 to K80 and G104 to T106. The active-site Proton acceptor is the D75. Residues D75 and G104 each coordinate Mg(2+). Residues D75–K78, N102–H105, T189, K203, Q315, T331, and K459 each bind IMP. Residue H105 is the Proton donor of the active site. Residue A455 to R461 coordinates substrate. GTP-binding positions include R461 and G589 to G591.

The protein belongs to the adenylosuccinate synthetase family. In terms of assembly, homodimer. Mg(2+) is required as a cofactor.

It localises to the cytoplasm. It carries out the reaction IMP + L-aspartate + GTP = N(6)-(1,2-dicarboxyethyl)-AMP + GDP + phosphate + 2 H(+). Its pathway is purine metabolism; AMP biosynthesis via de novo pathway; AMP from IMP: step 1/2. Functionally, plays an important role in the salvage pathway for purine nucleotide biosynthesis. Catalyzes the first committed step in the biosynthesis of AMP from IMP. This chain is Adenylosuccinate synthetase, found in Trypanosoma brucei brucei (strain 927/4 GUTat10.1).